The primary structure comprises 343 residues: Heat-inducible transcription repressor HrcA (343 aa).

This sequence belongs to the HrcA family.

Its function is as follows. Negative regulator of class I heat shock genes (grpE-dnaK-dnaJ and groELS operons). Prevents heat-shock induction of these operons. The chain is Heat-inducible transcription repressor HrcA from Mycolicibacterium smegmatis (strain ATCC 700084 / mc(2)155) (Mycobacterium smegmatis).